A 371-amino-acid chain; its full sequence is tRNA 2-selenouridine synthase (371 aa).

Residues 14–137 enclose the Rhodanese domain; sequence FLDDVPLIDL…MRRFLIDTLD (124 aa). Cysteine 97 serves as the catalytic S-selanylcysteine intermediate.

This sequence belongs to the SelU family. In terms of assembly, monomer.

The catalysed reaction is 5-methylaminomethyl-2-thiouridine(34) in tRNA + selenophosphate + (2E)-geranyl diphosphate + H2O + H(+) = 5-methylaminomethyl-2-selenouridine(34) in tRNA + (2E)-thiogeraniol + phosphate + diphosphate. It carries out the reaction 5-methylaminomethyl-2-thiouridine(34) in tRNA + (2E)-geranyl diphosphate = 5-methylaminomethyl-S-(2E)-geranyl-thiouridine(34) in tRNA + diphosphate. The enzyme catalyses 5-methylaminomethyl-S-(2E)-geranyl-thiouridine(34) in tRNA + selenophosphate + H(+) = 5-methylaminomethyl-2-(Se-phospho)selenouridine(34) in tRNA + (2E)-thiogeraniol. It catalyses the reaction 5-methylaminomethyl-2-(Se-phospho)selenouridine(34) in tRNA + H2O = 5-methylaminomethyl-2-selenouridine(34) in tRNA + phosphate. Its function is as follows. Involved in the post-transcriptional modification of the uridine at the wobble position (U34) of tRNA(Lys), tRNA(Glu) and tRNA(Gln). Catalyzes the conversion of 2-thiouridine (S2U-RNA) to 2-selenouridine (Se2U-RNA). Acts in a two-step process involving geranylation of 2-thiouridine (S2U) to S-geranyl-2-thiouridine (geS2U) and subsequent selenation of the latter derivative to 2-selenouridine (Se2U) in the tRNA chain. The sequence is that of tRNA 2-selenouridine synthase from Aeromonas salmonicida (strain A449).